Consider the following 640-residue polypeptide: Calpain-5 (640 aa).

The Calpain catalytic domain maps to 26 to 343; sequence LFEDPLFPAT…FTDIIKCRLI (318 aa). Catalysis depends on residues Cys81, His252, and Asn284. The interval 344–496 is domain III; it reads NTSYLSIHKT…VFTDVPSNCR (153 aa). A C2 domain is found at 499 to 617; that stretch reads RLDEPPRTCW…HTLHLQDRSS (119 aa).

This sequence belongs to the peptidase C2 family.

Calcium-regulated non-lysosomal thiol-protease. The sequence is that of Calpain-5 (Capn5) from Mus musculus (Mouse).